The chain runs to 102 residues: MKGLVRYMLHMDDPNKFKYQKEDMIVYGGVDVDELLKKTTTDRYKLIKEMIEFIDEQGIVEFKSLMDYAMKFKFDDWFPLLCDNSAYVIQEYIKSNRYKSDR.

The protein belongs to the Gram-positive plasmids replication protein type 2 family.

This is an uncharacterized protein from Staphylococcus aureus.